We begin with the raw amino-acid sequence, 364 residues long: Succinyl-diaminopimelate desuccinylase (364 aa).

His-64 provides a ligand contact to Zn(2+). Asp-66 is a catalytic residue. Asp-95 contributes to the Zn(2+) binding site. Glu-125 acts as the Proton acceptor in catalysis. Zn(2+) is bound by residues Glu-126, Glu-154, and His-339.

Belongs to the peptidase M20A family. DapE subfamily. Homodimer. Zn(2+) serves as cofactor. Requires Co(2+) as cofactor.

The catalysed reaction is N-succinyl-(2S,6S)-2,6-diaminopimelate + H2O = (2S,6S)-2,6-diaminopimelate + succinate. The protein operates within amino-acid biosynthesis; L-lysine biosynthesis via DAP pathway; LL-2,6-diaminopimelate from (S)-tetrahydrodipicolinate (succinylase route): step 3/3. Functionally, catalyzes the hydrolysis of N-succinyl-L,L-diaminopimelic acid (SDAP), forming succinate and LL-2,6-diaminopimelate (DAP), an intermediate involved in the bacterial biosynthesis of lysine and meso-diaminopimelic acid, an essential component of bacterial cell walls. This Nitratiruptor sp. (strain SB155-2) protein is Succinyl-diaminopimelate desuccinylase.